A 161-amino-acid polypeptide reads, in one-letter code: Lipoprotein signal peptidase (161 aa).

The next 2 membrane-spanning stretches (helical) occupy residues 64 to 84 and 92 to 114; these read YRVPFFIITTSVAVVFLAWFY and VLGRCAVSLVLGGAIGNLIDRVR. Residues Asp120 and Asp138 contribute to the active site. The chain crosses the membrane as a helical span at residues 131 to 151; the sequence is WPAFNVADSAICVGVGMLLLA.

This sequence belongs to the peptidase A8 family.

It is found in the cell inner membrane. It carries out the reaction Release of signal peptides from bacterial membrane prolipoproteins. Hydrolyzes -Xaa-Yaa-Zaa-|-(S,diacylglyceryl)Cys-, in which Xaa is hydrophobic (preferably Leu), and Yaa (Ala or Ser) and Zaa (Gly or Ala) have small, neutral side chains.. It functions in the pathway protein modification; lipoprotein biosynthesis (signal peptide cleavage). Functionally, this protein specifically catalyzes the removal of signal peptides from prolipoproteins. This chain is Lipoprotein signal peptidase, found in Syntrophotalea carbinolica (strain DSM 2380 / NBRC 103641 / GraBd1) (Pelobacter carbinolicus).